A 251-amino-acid polypeptide reads, in one-letter code: MLITDTLSPQAFEEALRAKGDFYHIHHPYHIAMHNGNATREQIQGWVANRFYYQTTIPLKDAAIMANCPDAQTRRKWVQRILDHDGSHGEDGGIEAWLRLGEAVGLSRDDLLSERHVLPGVRFAVDAYLNFARRACWQEAACSSLTELFAPQIHQSRLDSWPQHYPWIKEEGYFYFRSRLSQANRDVEHGLALAKAYCDSAEKQNRMLEILQFKLDILWSMLDAMTMAYALQRPPYHTVTDKAAWHTTRLV.

This sequence belongs to the PqqC family.

It catalyses the reaction 6-(2-amino-2-carboxyethyl)-7,8-dioxo-1,2,3,4,7,8-hexahydroquinoline-2,4-dicarboxylate + 3 O2 = pyrroloquinoline quinone + 2 H2O2 + 2 H2O + H(+). It functions in the pathway cofactor biosynthesis; pyrroloquinoline quinone biosynthesis. Functionally, ring cyclization and eight-electron oxidation of 3a-(2-amino-2-carboxyethyl)-4,5-dioxo-4,5,6,7,8,9-hexahydroquinoline-7,9-dicarboxylic-acid to PQQ. The chain is Pyrroloquinoline-quinone synthase from Klebsiella pneumoniae subsp. pneumoniae (strain ATCC 700721 / MGH 78578).